A 273-amino-acid polypeptide reads, in one-letter code: Ribosomal RNA small subunit methyltransferase A (273 aa).

6 residues coordinate S-adenosyl-L-methionine: asparagine 18, leucine 20, glycine 45, glutamate 66, aspartate 91, and asparagine 113.

This sequence belongs to the class I-like SAM-binding methyltransferase superfamily. rRNA adenine N(6)-methyltransferase family. RsmA subfamily.

Its subcellular location is the cytoplasm. The catalysed reaction is adenosine(1518)/adenosine(1519) in 16S rRNA + 4 S-adenosyl-L-methionine = N(6)-dimethyladenosine(1518)/N(6)-dimethyladenosine(1519) in 16S rRNA + 4 S-adenosyl-L-homocysteine + 4 H(+). Its function is as follows. Specifically dimethylates two adjacent adenosines (A1518 and A1519) in the loop of a conserved hairpin near the 3'-end of 16S rRNA in the 30S particle. May play a critical role in biogenesis of 30S subunits. This chain is Ribosomal RNA small subunit methyltransferase A, found in Erwinia tasmaniensis (strain DSM 17950 / CFBP 7177 / CIP 109463 / NCPPB 4357 / Et1/99).